The primary structure comprises 536 residues: Chaperonin GroEL 2 (536 aa).

ATP is bound by residues 29 to 32, 86 to 90, Gly-412, and Asp-495; these read TLGP and DGTTT.

It belongs to the chaperonin (HSP60) family. Forms a cylinder of 14 subunits composed of two heptameric rings stacked back-to-back. Interacts with the co-chaperonin GroES.

It is found in the cytoplasm. The enzyme catalyses ATP + H2O + a folded polypeptide = ADP + phosphate + an unfolded polypeptide.. Its function is as follows. Together with its co-chaperonin GroES, plays an essential role in assisting protein folding. The GroEL-GroES system forms a nano-cage that allows encapsulation of the non-native substrate proteins and provides a physical environment optimized to promote and accelerate protein folding. This chain is Chaperonin GroEL 2, found in Arthrobacter sp. (strain FB24).